A 166-amino-acid chain; its full sequence is Probable glucosamine 6-phosphate N-acetyltransferase 2 (166 aa).

Residues 21–166 form the N-acetyltransferase domain; sequence VQIRRLEATD…EKGVQMAIYF (146 aa). Substrate-binding positions include serine 43, 93–96, and 105–107; these read KFLR and EDV. 115-120 provides a ligand contact to acetyl-CoA; that stretch reads GRGLGL. 136–137 is a binding site for substrate; sequence YK. Residue 150–152 coordinates acetyl-CoA; that stretch reads YAK.

The protein belongs to the acetyltransferase family. GNA1 subfamily. In terms of assembly, homodimer.

The protein resides in the endoplasmic reticulum membrane. The catalysed reaction is D-glucosamine 6-phosphate + acetyl-CoA = N-acetyl-D-glucosamine 6-phosphate + CoA + H(+). It functions in the pathway nucleotide-sugar biosynthesis; UDP-N-acetyl-alpha-D-glucosamine biosynthesis; N-acetyl-alpha-D-glucosamine 1-phosphate from alpha-D-glucosamine 6-phosphate (route I): step 1/2. Acetyltransferase involved in UDP-N-acetylglucosamine (UDP-GlcNAc) biosynthesis. UDP-GlcNAc is an essential metabolite that serves as an initial sugar donor of N-glycan synthesis and thus plays an important role in protein and lipid glycosylation. In Oryza sativa subsp. japonica (Rice), this protein is Probable glucosamine 6-phosphate N-acetyltransferase 2.